Reading from the N-terminus, the 399-residue chain is Chorismate synthase (399 aa).

NADP(+) is bound by residues arginine 40 and arginine 46. Residues 129 to 131 (RSS), 257 to 258 (QA), glycine 302, 317 to 321 (KPISS), and arginine 343 each bind FMN.

It belongs to the chorismate synthase family. Homotetramer. FMNH2 serves as cofactor.

It catalyses the reaction 5-O-(1-carboxyvinyl)-3-phosphoshikimate = chorismate + phosphate. It functions in the pathway metabolic intermediate biosynthesis; chorismate biosynthesis; chorismate from D-erythrose 4-phosphate and phosphoenolpyruvate: step 7/7. In terms of biological role, catalyzes the anti-1,4-elimination of the C-3 phosphate and the C-6 proR hydrogen from 5-enolpyruvylshikimate-3-phosphate (EPSP) to yield chorismate, which is the branch point compound that serves as the starting substrate for the three terminal pathways of aromatic amino acid biosynthesis. This reaction introduces a second double bond into the aromatic ring system. This Chlorobium chlorochromatii (strain CaD3) protein is Chorismate synthase.